Consider the following 1294-residue polypeptide: Leucine-rich repeat receptor protein kinase MSP1 (1294 aa).

An N-terminal signal peptide occupies residues 1–22; that stretch reads MVSNSFWLFILLVSFIPISAWA. LRR repeat units lie at residues 88 to 112, 113 to 136, 138 to 160, 161 to 184, and 186 to 207; these read FQSL…LGNL, QNLQ…LYNL, MLKE…IAQL, QHLT…LGSL, and NLEL…TFGN. N-linked (GlcNAc...) asparagine glycans are attached at residues asparagine 198, asparagine 207, and asparagine 220. 23 LRR repeats span residues 232 to 256, 258 to 280, 282 to 304, 305 to 328, 330 to 352, 353 to 376, 378 to 400, 401 to 422, 423 to 446, 447 to 469, 471 to 493, 494 to 517, 519 to 541, 542 to 565, 566 to 589, 591 to 613, 614 to 637, 649 to 673, 675 to 697, 698 to 721, 722 to 745, 746 to 770, and 772 to 794; these read LTNL…IGQL, NLEL…IGSL, QLKL…ISGL, SSLT…MGEL, NLTQ…LGNC, KKLT…FADL, AIVS…IQKW, KNAR…VLPL, QHLL…ICQA, NSLH…AFKG, TNLT…YLAE, LPLV…LWES, TLLE…IGKL, SVLQ…VGDL, RNLT…LFNC, KLAT…ISHL, TLLD…ICVG, LQHH…IKNC, MVMV…LGEL, TNLT…SGPL, VQLQ…IGQI, LPKI…LLCN, and YLNH…CPDG. 2 N-linked (GlcNAc...) asparagine glycosylation sites follow: asparagine 330 and asparagine 359. Asparagine 458 and asparagine 472 each carry an N-linked (GlcNAc...) asparagine glycan. Residues asparagine 567, asparagine 570, and asparagine 601 are each glycosylated (N-linked (GlcNAc...) asparagine). N-linked (GlcNAc...) asparagine glycans are attached at residues asparagine 687, asparagine 699, and asparagine 704. N-linked (GlcNAc...) asparagine glycosylation is found at asparagine 805, asparagine 821, and asparagine 832. LRR repeat units lie at residues 822-846 and 848-870; these read FTQL…LSDL and SLNY…ICNI. Residues 917 to 937 traverse the membrane as a helical segment; the sequence is ITICAFTFVIIIVLVLLAVYL. Residues 1002 to 1282 enclose the Protein kinase domain; that stretch reads FSKVHIIGDG…KGLKMTHGME (281 aa). Residues 1008–1016 and lysine 1030 each bind ATP; that span reads IGDGGFGTV. Aspartate 1129 (proton acceptor) is an active-site residue.

Belongs to the protein kinase superfamily. Ser/Thr protein kinase family. In terms of assembly, interacts with TDL1A. As to expression, expressed in anthers and ovules during meiosis.

Its subcellular location is the cell membrane. It catalyses the reaction L-seryl-[protein] + ATP = O-phospho-L-seryl-[protein] + ADP + H(+). The catalysed reaction is L-threonyl-[protein] + ATP = O-phospho-L-threonyl-[protein] + ADP + H(+). Its function is as follows. Receptor-like kinase that plays important roles in restricting the number of cells entering into male and female sporogenesis. Involved in cell specification during anther development and initiation of anther wall formation. The polypeptide is Leucine-rich repeat receptor protein kinase MSP1 (Oryza sativa subsp. japonica (Rice)).